A 463-amino-acid polypeptide reads, in one-letter code: Protoheme IX farnesyltransferase (463 aa).

A unknown region spans residues 1 to 193 (MAESRTFTGL…AYFRLMKPRL (193 aa)). Transmembrane regions (helical) follow at residues 6-26 (TFTG…LAGA), 54-74 (LLVA…VVAM), 89-109 (AAII…AIVA), and 115-135 (ALPG…VLAL). The disordered stretch occupies residues 144 to 170 (GSDDETPVKNPTPAPEPAGDDTPDRTP). Transmembrane regions (helical) follow at residues 193-213 (LMWL…GQTL), 218-238 (VLLT…FNHV), 265-285 (ALAF…QVNA), 286-306 (LVAV…TLVL), 314-334 (TVLG…AADG), 336-356 (VGLP…AHFY), 387-407 (IVYY…LTPL), 409-429 (WLYA…VVLL), and 441-461 (AFHA…VDAL). The tract at residues 194–460 (MWLLCLVAAA…AVLIAIVVDA (267 aa)) is protoheme IX prenyltransferase.

The protein in the C-terminal section; belongs to the UbiA prenyltransferase family. Protoheme IX farnesyltransferase subfamily.

Its subcellular location is the cell membrane. It carries out the reaction heme b + (2E,6E)-farnesyl diphosphate + H2O = Fe(II)-heme o + diphosphate. The protein operates within porphyrin-containing compound metabolism; heme O biosynthesis; heme O from protoheme: step 1/1. Functionally, converts heme B (protoheme IX) to heme O by substitution of the vinyl group on carbon 2 of heme B porphyrin ring with a hydroxyethyl farnesyl side group. In Haloarcula marismortui (strain ATCC 43049 / DSM 3752 / JCM 8966 / VKM B-1809) (Halobacterium marismortui), this protein is Protoheme IX farnesyltransferase (ctaB).